A 102-amino-acid chain; its full sequence is Sulfur globule protein CV3 (102 aa).

An N-terminal signal peptide occupies residues methionine 1–alanine 25.

In terms of assembly, the protein envelope of the sulfur globules is composed of the three different proteins CV1, CV2 and CV3.

Structural protein of the sulfur globules, which are intracellular globules that serve for sulfur storage in purple sulfur bacteria. The protein is Sulfur globule protein CV3 (sgpC) of Allochromatium vinosum (strain ATCC 17899 / DSM 180 / NBRC 103801 / NCIMB 10441 / D) (Chromatium vinosum).